The following is a 340-amino-acid chain: Lipoate--protein ligase 2 (340 aa).

Residues 31 to 222 (FLDEDILFPY…QILGIDDIKE (192 aa)) enclose the BPL/LPL catalytic domain. Residues arginine 73, 78-81 (GAVY), lysine 136, and alanine 140 contribute to the ATP site. Lysine 136 contacts (R)-lipoate. The stretch at 293–321 (QGDIKDVEEALQGTKMTREDLMHQLKQLD) forms a coiled coil.

It belongs to the LplA family.

It carries out the reaction L-lysyl-[lipoyl-carrier protein] + (R)-lipoate + ATP = N(6)-[(R)-lipoyl]-L-lysyl-[lipoyl-carrier protein] + AMP + diphosphate + H(+). It participates in protein modification; protein lipoylation via exogenous pathway; protein N(6)-(lipoyl)lysine from lipoate: step 1/2. It functions in the pathway protein modification; protein lipoylation via exogenous pathway; protein N(6)-(lipoyl)lysine from lipoate: step 2/2. In terms of biological role, catalyzes specifically the lipoylation of GcvH-L (SAV0324), likely via the ATP-dependent activation of lipoate to lipoyl-AMP and the transfer of the activated lipoyl onto the lipoyl domain of the target protein. Can also utilize lipoamide as substrate for GcvH-L modification. The chain is Lipoate--protein ligase 2 from Staphylococcus aureus (strain Mu50 / ATCC 700699).